Reading from the N-terminus, the 163-residue chain is Nucleotide-binding protein YajQ (163 aa).

This sequence belongs to the YajQ family.

Functionally, nucleotide-binding protein. This is Nucleotide-binding protein YajQ from Salmonella agona (strain SL483).